A 163-amino-acid chain; its full sequence is MMNIVLARIDDRFIHGQILTRWIKVHAADRIIVVSDDIAQDEMRKTLILSVAPSNVKASAVSVSKMAKAFHSPRYEGVTAMLLFENPSDIVSLIEAGVPIKTVNVGGMRFENHRRQITKSVSVTEQDIKAFETLSDKGVKLELRQLPSDASEDFVQILRNVTK.

Residues 1–163 form the PTS EIIB type-4 domain; that stretch reads MMNIVLARID…FVQILRNVTK (163 aa). The active-site Pros-phosphohistidine intermediate is the His15. Position 15 is a phosphohistidine; by EIIA (His15).

It is found in the cytoplasm. The catalysed reaction is D-fructose(out) + N(pros)-phospho-L-histidyl-[protein] = D-fructose 1-phosphate(in) + L-histidyl-[protein]. Functionally, the phosphoenolpyruvate-dependent sugar phosphotransferase system (sugar PTS), a major carbohydrate active -transport system, catalyzes the phosphorylation of incoming sugar substrates concomitantly with their translocation across the cell membrane. The enzyme II LevDE PTS system is involved in fructose transport. In terms of biological role, levD and LevE act as negative regulators of the levanase operon. They may be involved in a PTS-mediated phosphorylation of a regulator. The chain is PTS system fructose-specific EIIB component from Bacillus subtilis (strain 168).